The sequence spans 206 residues: Small ribosomal subunit protein uS4 (206 aa).

The S4 RNA-binding domain occupies Met98–Asn163.

It belongs to the universal ribosomal protein uS4 family. In terms of assembly, part of the 30S ribosomal subunit. Contacts protein S5. The interaction surface between S4 and S5 is involved in control of translational fidelity.

One of the primary rRNA binding proteins, it binds directly to 16S rRNA where it nucleates assembly of the body of the 30S subunit. In terms of biological role, with S5 and S12 plays an important role in translational accuracy. The chain is Small ribosomal subunit protein uS4 from Clostridium beijerinckii (strain ATCC 51743 / NCIMB 8052) (Clostridium acetobutylicum).